Here is a 331-residue protein sequence, read N- to C-terminus: Glycerophosphodiester phosphodiesterase 1 (331 aa).

Residues 1–3 (MWL) are Cytoplasmic-facing. The chain crosses the membrane as a helical span at residues 4 to 24 (WEDQGGLLGPFSFLLLVLLLV). The Lumenal portion of the chain corresponds to 25-247 (TRSPVNACLL…KPRYDTFWKH (223 aa)). Residues 65–331 (ISAIAHRGGS…SMVEDCEPHF (267 aa)) form the GP-PDE domain. Positions 97 and 99 each coordinate Mg(2+). A glycan (N-linked (GlcNAc...) asparagine) is linked at Asn168. A Mg(2+)-binding site is contributed by Asp174. N-linked (GlcNAc...) asparagine glycosylation occurs at Asn198. The chain crosses the membrane as a helical span at residues 248–268 (FIFVMMDILLDWSMHNILWYL). Residues 269-331 (CGISAFLMQK…SMVEDCEPHF (63 aa)) are Cytoplasmic-facing.

The protein belongs to the glycerophosphoryl diester phosphodiesterase family. As to quaternary structure, interacts with PRAF2. Interacts with RGS16. It depends on Mg(2+) as a cofactor. N-glycosylated. In terms of tissue distribution, widely expressed.

It is found in the cell membrane. The protein localises to the cytoplasmic vesicle membrane. The enzyme catalyses sn-glycero-3-phospho-1D-myo-inositol + H2O = myo-inositol + sn-glycerol 3-phosphate + H(+). The catalysed reaction is 1-O-(1Z-octadecenyl)-sn-glycero-3-phospho-(N-5Z,8Z,11Z,14Z-eicosatetraenoyl)-ethanolamine + H2O = 1-O-(1Z-octadecenyl)-sn-glycero-3-phosphate + N-(5Z,8Z,11Z,14Z-eicosatetraenoyl)-ethanolamine + H(+). It carries out the reaction 1-O-(1Z-octadecenyl)-sn-glycero-3-phospho-(N-9Z-octadecenoyl)-ethanolamine + H2O = 1-O-(1Z-octadecenyl)-sn-glycero-3-phosphate + N-(9Z-octadecenoyl) ethanolamine + H(+). It catalyses the reaction 1-O-(1Z-octadecenyl)-sn-glycero-3-phospho-N-hexadecanoyl-ethanolamine + H2O = 1-O-(1Z-octadecenyl)-sn-glycero-3-phosphate + N-hexadecanoylethanolamine + H(+). The enzyme catalyses N-(4Z,7Z,10Z,13Z,16Z,19Z)-docosahexaenoyl-sn-glycero-3-phosphoethanolamine + H2O = N-(4Z,7Z,10Z,13Z,16Z,19Z)-docosahexaenoyl ethanolamine + sn-glycerol 3-phosphate + H(+). The catalysed reaction is N-eicosanoyl-sn-glycero-3-phosphoethanolamine + H2O = N-eicosanoyl ethanolamine + sn-glycerol 3-phosphate + H(+). It carries out the reaction N-hexadecanoyl-sn-glycero-3-phosphoethanolamine + H2O = N-hexadecanoylethanolamine + sn-glycerol 3-phosphate + H(+). It catalyses the reaction N-(9Z-octadecenoyl)-sn-glycero-3-phosphoethanolamine + H2O = N-(9Z-octadecenoyl) ethanolamine + sn-glycerol 3-phosphate + H(+). The enzyme catalyses N-(5Z,8Z,11Z,14Z-eicosatetraenoyl)-sn-glycero-3-phosphoethanolamine + H2O = N-(5Z,8Z,11Z,14Z-eicosatetraenoyl)-ethanolamine + sn-glycerol 3-phosphate + H(+). With respect to regulation, inhibited by EDTA, calcium chloride, and zinc chloride. Enhanced by magnesium chloride. Glycerophosphodiester phosphodiesterase activity can be modulated by G-protein signaling pathways. Its function is as follows. Hydrolyzes the phosphodiester bond of glycerophosphodiesters such as glycerophosphoinositol (GroPIns) and glycerophosphoethanolamine (GroPEth), to yield a glycerol phosphate and an alcohol. Hydrolyzes glycerophospho-N-acylethanolamines to N-acylethanolamines in the brain and participates in bioactive N-acylethanolamine biosynthesis such as anandamide (an endocannabinoid), N-palmitoylethanolamine (an anti-inflammatory), and N-oleoylethanolamine (an anorexic). In addition, has a lysophospholipase D activity by hydrolyzing N-acyl-lysoplasmenylethanolamine (N-acyl-lysoPlsEt) to N-acylethanolamine. However lysophospholipase D activity is lower than glycerophosphodiester phosphodiesterase activity. Has little or no activity towards glycerophosphocholine. This chain is Glycerophosphodiester phosphodiesterase 1, found in Homo sapiens (Human).